Consider the following 314-residue polypeptide: Methionyl-tRNA formyltransferase (314 aa).

Position 113–116 (113–116) interacts with (6S)-5,6,7,8-tetrahydrofolate; sequence SLLP.

Belongs to the Fmt family.

The catalysed reaction is L-methionyl-tRNA(fMet) + (6R)-10-formyltetrahydrofolate = N-formyl-L-methionyl-tRNA(fMet) + (6S)-5,6,7,8-tetrahydrofolate + H(+). Functionally, attaches a formyl group to the free amino group of methionyl-tRNA(fMet). The formyl group appears to play a dual role in the initiator identity of N-formylmethionyl-tRNA by promoting its recognition by IF2 and preventing the misappropriation of this tRNA by the elongation apparatus. This Pseudomonas savastanoi pv. phaseolicola (strain 1448A / Race 6) (Pseudomonas syringae pv. phaseolicola (strain 1448A / Race 6)) protein is Methionyl-tRNA formyltransferase.